Reading from the N-terminus, the 468-residue chain is Cysteine--tRNA ligase (468 aa).

C33 serves as a coordination point for Zn(2+). The 'HIGH' region motif lies at 35-45; that stretch reads ATVQGLPHIGH. The Zn(2+) site is built by C211, H236, and E240. Residues 267-271 carry the 'KMSKS' region motif; that stretch reads KMSKS. K270 serves as a coordination point for ATP.

Belongs to the class-I aminoacyl-tRNA synthetase family. In terms of assembly, monomer. Requires Zn(2+) as cofactor.

It localises to the cytoplasm. It carries out the reaction tRNA(Cys) + L-cysteine + ATP = L-cysteinyl-tRNA(Cys) + AMP + diphosphate. The polypeptide is Cysteine--tRNA ligase (Mycobacterium marinum (strain ATCC BAA-535 / M)).